The following is an 862-amino-acid chain: Putative cargo-transport protein ypp1 (862 aa).

TPR repeat units follow at residues 342–377, 460–493, and 494–527; these read QQIF…KSHE, SFMY…QPTN, and TNAL…NPKY. Phosphoserine is present on residues Ser-632, Ser-633, and Ser-637. 4 TPR repeats span residues 665–698, 705–738, 740–772, and 814–847; these read ILGF…RRGK, QKLW…DHEC, WVYY…DPED, and PEAW…ADTN.

The protein belongs to the YPP1 family.

It localises to the cytoplasm. In terms of biological role, involved in endocytosis. The polypeptide is Putative cargo-transport protein ypp1 (ypp1) (Schizosaccharomyces pombe (strain 972 / ATCC 24843) (Fission yeast)).